The sequence spans 86 residues: Omega-theraphotoxin-Hhn1e (86 aa).

The first 21 residues, Met1–Ala21, serve as a signal peptide directing secretion. Residues Ser22–Arg50 constitute a propeptide that is removed on maturation. 2 disulfides stabilise this stretch: Cys52–Cys66 and Cys65–Cys78.

It belongs to the neurotoxin 10 (Hwtx-1) family. 17 (Hntx-9) subfamily. As to expression, expressed by the venom gland.

It localises to the secreted. Ion channel inhibitor. The sequence is that of Omega-theraphotoxin-Hhn1e from Cyriopagopus hainanus (Chinese bird spider).